The primary structure comprises 106 residues: Transcription and mRNA export factor SUS1 (106 aa).

The protein belongs to the ENY2 family. As to quaternary structure, component of the nuclear pore complex (NPC)-associated TREX-2 complex (transcription and export complex 2), composed of at least SUS1, SAC3, THP1, SEM1, and CDC31. TREX-2 contains 2 SUS1 chains. The TREX-2 complex interacts with the nucleoporin NUP1. Component of the 1.8 MDa SAGA transcription coactivator-HAT complex. SAGA is built of 5 distinct domains with specialized functions. Within the SAGA complex, SUS1, SGF11, SGF73 and UBP8 form an additional subcomplex of SAGA called the DUB module (deubiquitination module). Interacts directly with THP1, SAC3, SGF11, and with the RNA polymerase II.

The protein localises to the nucleus. The protein resides in the nucleoplasm. Its subcellular location is the cytoplasm. It is found in the P-body. Involved in mRNA export coupled transcription activation by association with both the TREX-2 and the SAGA complexes. At the promoters, SAGA is required for recruitment of the basal transcription machinery. It influences RNA polymerase II transcriptional activity through different activities such as TBP interaction and promoter selectivity, interaction with transcription activators, and chromatin modification through histone acetylation and deubiquitination. Within the SAGA complex, participates in a subcomplex required for deubiquitination of H2B and for the maintenance of steady-state H3 methylation levels. The TREX-2 complex functions in docking export-competent ribonucleoprotein particles (mRNPs) to the nuclear entrance of the nuclear pore complex (nuclear basket). TREX-2 participates in mRNA export and accurate chromatin positioning in the nucleus by tethering genes to the nuclear periphery. May also be involved in cytoplasmic mRNA decay by interaction with components of P-bodies. The polypeptide is Transcription and mRNA export factor SUS1 (Mycosarcoma maydis (Corn smut fungus)).